We begin with the raw amino-acid sequence, 196 residues long: MAEGSALLRGSSNHKVTLVTGNDGKRREVQACLEGHVLVENVNLDLPEMQSDSVFEISRNKALMAYDITKSPVLVEDTALCFDALGGLPGPYVKWFFERIGPTGLIKLLEGFDTRRAYATCVFTYCASPDVVLQFEGRCDGRIVEAPRGEGGFGWDSVFEPDEGCGQTFAEMQDEEKNRISPRAKALVALKAHFCL.

Threonine 20–lysine 25 lines the ITP pocket. Residue glutamate 48 coordinates Mg(2+). Residues lysine 61, aspartate 77–threonine 78, lysine 94, phenylalanine 153–aspartate 156, lysine 177, and proline 182–arginine 183 each bind ITP.

Belongs to the HAM1 NTPase family. Homodimer. Requires Mg(2+) as cofactor. The cofactor is Mn(2+).

It is found in the cytoplasm. The catalysed reaction is ITP + H2O = IMP + diphosphate + H(+). The enzyme catalyses dITP + H2O = dIMP + diphosphate + H(+). It catalyses the reaction XTP + H2O = XMP + diphosphate + H(+). Its function is as follows. Pyrophosphatase that hydrolyzes non-canonical purine nucleotides such as inosine triphosphate (ITP), deoxyinosine triphosphate (dITP) or xanthosine 5'-triphosphate (XTP) to their respective monophosphate derivatives. The enzyme does not distinguish between the deoxy- and ribose forms. Probably excludes non-canonical purines from RNA and DNA precursor pools, thus preventing their incorporation into RNA and DNA and avoiding chromosomal lesions. This chain is Inosine triphosphate pyrophosphatase 1, found in Trypanosoma cruzi (strain CL Brener).